Reading from the N-terminus, the 224-residue chain is Viral late gene transcription factor 3 (224 aa).

Residues 6 to 26 fold into a zinc finger; the sequence is CSGCRHNGIVSEQGYEYCIFC.

The protein belongs to the orthopoxvirus VLTF-3/OPG127 family. In terms of assembly, interacts with the late transcription elongation factor VLTF-4/OPG110. Interacts with the late transcription factors VLTF-1/OPG093.

Its function is as follows. Acts with RNA polymerase to initiate transcription from late gene promoters. The protein is Viral late gene transcription factor 3 (OPG127) of Vaccinia virus (strain Ankara) (VACV).